Consider the following 186-residue polypeptide: Translation initiation factor IF-3 (186 aa).

A disordered region spans residues methionine 1 to leucine 20.

Belongs to the IF-3 family. As to quaternary structure, monomer.

It is found in the cytoplasm. IF-3 binds to the 30S ribosomal subunit and shifts the equilibrium between 70S ribosomes and their 50S and 30S subunits in favor of the free subunits, thus enhancing the availability of 30S subunits on which protein synthesis initiation begins. The protein is Translation initiation factor IF-3 of Borrelia hermsii (strain HS1 / DAH).